A 455-amino-acid polypeptide reads, in one-letter code: Argininosuccinate lyase (455 aa).

It belongs to the lyase 1 family. Argininosuccinate lyase subfamily.

It localises to the cytoplasm. It carries out the reaction 2-(N(omega)-L-arginino)succinate = fumarate + L-arginine. It functions in the pathway amino-acid biosynthesis; L-arginine biosynthesis; L-arginine from L-ornithine and carbamoyl phosphate: step 3/3. The polypeptide is Argininosuccinate lyase (Roseiflexus sp. (strain RS-1)).